A 330-amino-acid polypeptide reads, in one-letter code: Type II restriction enzyme Cfr9I (330 aa).

The protein belongs to the XcyI type II restriction endonuclease family. It depends on Mg(2+) as a cofactor.

The catalysed reaction is Endonucleolytic cleavage of DNA to give specific double-stranded fragments with terminal 5'-phosphates.. An E and P subtype restriction enzyme that recognizes the double-stranded sequence 5'-CCCGGG-3' and cleaves after C-1. The chain is Type II restriction enzyme Cfr9I (cfr9IR) from Citrobacter freundii.